A 347-amino-acid polypeptide reads, in one-letter code: N-acetyl-gamma-glutamyl-phosphate reductase (347 aa).

Residue Cys151 is part of the active site.

This sequence belongs to the NAGSA dehydrogenase family. Type 1 subfamily.

Its subcellular location is the cytoplasm. The catalysed reaction is N-acetyl-L-glutamate 5-semialdehyde + phosphate + NADP(+) = N-acetyl-L-glutamyl 5-phosphate + NADPH + H(+). The protein operates within amino-acid biosynthesis; L-arginine biosynthesis; N(2)-acetyl-L-ornithine from L-glutamate: step 3/4. Its function is as follows. Catalyzes the NADPH-dependent reduction of N-acetyl-5-glutamyl phosphate to yield N-acetyl-L-glutamate 5-semialdehyde. This Corynebacterium diphtheriae (strain ATCC 700971 / NCTC 13129 / Biotype gravis) protein is N-acetyl-gamma-glutamyl-phosphate reductase.